Consider the following 587-residue polypeptide: Synaptotagmin-3 (587 aa).

Topologically, residues 1–54 (MSGDYEDDLCRRALILVSDLCARVRDADTNDRCQEFNELRIRGYPRGPDADISV) are vesicular. Positions 10–34 (CRRALILVSDLCARVRDADTNDRCQ) are cysteine motif. Residues 55 to 75 (SLLSVIVTFCGIVLLGVSLFV) traverse the membrane as a helical segment. Residues 76 to 587 (SWKLCWVPWR…KGLSEKENSE (512 aa)) are Cytoplasmic-facing. A compositionally biased stretch (low complexity) spans 183 to 205 (PSQTSPELPSEGGTGSGLLLLPP). The disordered stretch occupies residues 183 to 258 (PSQTSPELPS…EERPPALPLP (76 aa)). Positions 213–224 (AQSHQQVTSLAP) are enriched in polar residues. Residues 229 to 244 (PALPRPLTQQTLTTQA) are compositionally biased toward low complexity. Omega-N-methylarginine is present on R286. C2 domains are found at residues 296–417 (PCGR…PLWR) and 428–562 (DLGE…EHWH). Positions 327, 333, 385, 386, 387, 390, 393, 459, 465, 519, and 521 each coordinate Ca(2+).

The protein belongs to the synaptotagmin family. In terms of assembly, homodimer; disulfide-linked via the cysteine motif. Can also form heterodimers with SYT6, SYT9 and SYT10. Ca(2+) serves as cofactor.

It localises to the cell membrane. The protein localises to the cytoplasmic vesicle. It is found in the secretory vesicle membrane. Functionally, ca(2+) sensor involved in Ca(2+)-dependent exocytosis of secretory vesicles through Ca(2+) and phospholipid binding to the C2 domain. Ca(2+) induces binding of the C2-domains to phospholipid membranes and to assembled SNARE-complexes; both actions contribute to triggering exocytosis. Plays a role in dendrite formation by melanocytes. In Mus musculus (Mouse), this protein is Synaptotagmin-3 (Syt3).